We begin with the raw amino-acid sequence, 1128 residues long: Nck-associated protein 1 (1128 aa).

Residues 640–665 (AVNKKSKKQTGKKGEPEREKPGVESM) form a disordered region. A compositionally biased stretch (basic and acidic residues) spans 651-665 (KKGEPEREKPGVESM). A helical membrane pass occupies residues 995–1015 (IACLLMVFVAVSMPTLASNVM).

This sequence belongs to the HEM-1/HEM-2 family.

It is found in the cell membrane. Its subcellular location is the cell projection. The protein resides in the lamellipodium membrane. Part of the WAVE complex that regulates lamellipodia formation. The WAVE complex regulates actin filament reorganization via its interaction with the Arp2/3 complex. Actin remodeling activity is regulated by RAC1. Plays a role in neural tube closure. The protein is Nck-associated protein 1 (nckap1) of Danio rerio (Zebrafish).